The sequence spans 131 residues: MRNAKGFTLIELLIVIAIIAILAAVLIPNLLAARKRANDTVVTAYLNDAVKFQEMYQIDNNSYTSNQAALISLGLKSTPANVTFSIVSASANSYCMIAGHSGGTVWFAATPDKGVYKTNTAVTSSQPESCP.

The propeptide at 1–6 is leader sequence; sequence MRNAKG. Phe-7 carries the post-translational modification N-methylphenylalanine. A helical transmembrane segment spans residues 7-27; sequence FTLIELLIVIAIIAILAAVLI. Cys-95 and Cys-130 are disulfide-bonded.

As to quaternary structure, interacts with PilQ. Found in three forms of 14-kDa, 18-kDa and a glycosylated 23-kDa form. Both narrow and wide pili are glycosylated.

The protein localises to the cell inner membrane. It localises to the cell outer membrane. Its subcellular location is the periplasm. Its function is as follows. Plays an essential role in the assembly of two types of T4P pili: a wide and a narrow that participate in natural transformation and twitching motility. Major component of the wide pilus that is essential for natural transformation working as a DNA translocator structure that spans the inner and outer membranes. In addition, participates in the assembly of the narrow pilus composed of the PilA5 subunit that is required for twitching motility. This chain is Type IV wide pilus major component PilA4 (pilA4), found in Thermus thermophilus (strain ATCC BAA-163 / DSM 7039 / HB27).